An 88-amino-acid polypeptide reads, in one-letter code: Small ribosomal subunit protein bS20 (88 aa).

Residues 1-28 (MANIKSQIKRNKTNEKARLRNKAVKSSL) are disordered.

It belongs to the bacterial ribosomal protein bS20 family.

Functionally, binds directly to 16S ribosomal RNA. The sequence is that of Small ribosomal subunit protein bS20 from Streptomyces avermitilis (strain ATCC 31267 / DSM 46492 / JCM 5070 / NBRC 14893 / NCIMB 12804 / NRRL 8165 / MA-4680).